The primary structure comprises 954 residues: Calsyntenin-1 (954 aa).

A signal peptide spans 1–25; it reads MRIRGVKPFASAVGLLLGLLYAVDA. The Extracellular portion of the chain corresponds to 26–833; the sequence is AKVNKHKPWI…THQASVVPSA (808 aa). 2 consecutive Cadherin domains span residues 35–151 and 152–252; these read IETT…SPVF and KEKS…KPSW. 3 N-linked (GlcNAc...) asparagine glycosylation sites follow: Asn-333, Asn-353, and Asn-552. A helical transmembrane segment spans residues 834–854; sequence ATIVIVVCVSFLVFMIILGVF. Over 855–954 the chain is Cytoplasmic; sequence RIRAAHQRTM…LEWDDSTLTY (100 aa). The interval 891–954 is disordered; sequence TYEDQHSSEE…LEWDDSTLTY (64 aa). Residues 900–935 show a composition bias toward acidic residues; the sequence is EEGDEEEEESEDGEEEDDITSAESDSSEDEAGEQED.

Belongs to the calsyntenin family. Homooligomer and heterooligomer; mediates both homophilic and heterophilc interactions with clstn2 and clstn3 paralogs via cadherin domains. By 48 hours post-fertilization (hpf), widely expressed in the brain, with strong expression in the telencephalon and the midbrain.

It localises to the postsynaptic cell membrane. It is found in the endoplasmic reticulum membrane. The protein resides in the golgi apparatus membrane. The protein localises to the cell projection. Its subcellular location is the neuron projection. Its function is as follows. Postsynaptic adhesion molecule involved in vesicle trafficking; required for branching of peripheral but not central axons of sensory neurons. Promotes synapse development by acting as a cell adhesion molecule at the postsynaptic membrane, which associates with presynaptic neurexins. The chain is Calsyntenin-1 from Danio rerio (Zebrafish).